We begin with the raw amino-acid sequence, 124 residues long: Putative iron-sulfur cluster insertion protein ErpA (124 aa).

Residues cysteine 49, cysteine 113, and cysteine 115 each coordinate iron-sulfur cluster.

Belongs to the HesB/IscA family. As to quaternary structure, homodimer. Iron-sulfur cluster serves as cofactor.

Its function is as follows. Required for insertion of 4Fe-4S clusters. This is Putative iron-sulfur cluster insertion protein ErpA from Acidovorax sp. (strain JS42).